Here is a 397-residue protein sequence, read N- to C-terminus: Ribosomal RNA large subunit methyltransferase I (397 aa).

In terms of domain architecture, PUA spans 2 to 80 (AIRIKLKPGR…KEEAIDADFF (79 aa)).

Belongs to the methyltransferase superfamily. RlmI family.

The protein localises to the cytoplasm. The enzyme catalyses cytidine(1962) in 23S rRNA + S-adenosyl-L-methionine = 5-methylcytidine(1962) in 23S rRNA + S-adenosyl-L-homocysteine + H(+). In terms of biological role, specifically methylates the cytosine at position 1962 (m5C1962) of 23S rRNA. This chain is Ribosomal RNA large subunit methyltransferase I, found in Shewanella denitrificans (strain OS217 / ATCC BAA-1090 / DSM 15013).